Reading from the N-terminus, the 732-residue chain is Calcineurin-interacting protein 2 (732 aa).

6 disordered regions span residues 1 to 24 (MNRG…REPY), 115 to 169 (DYEP…ALPK), 181 to 232 (QKKD…LDDR), 310 to 351 (ILSR…TSRR), 372 to 397 (RSQS…STVS), and 426 to 708 (QTVT…PLEE). Polar residues predominate over residues 8–17 (YNRSRSTSSR). The segment covering 117 to 129 (EPLRKEPELKEQK) has biased composition (basic and acidic residues). 2 stretches are compositionally biased toward polar residues: residues 151–163 (SGIT…SSRT) and 189–208 (IPRQ…NNEL). Residues 312–323 (SRSVSTSPSSVT) are compositionally biased toward low complexity. A compositionally biased stretch (polar residues) spans 324 to 351 (DNIPKTSTSRIPSSENPKTMEHTTTSRR). Over residues 426-439 (QTVTNVRVPSSRGS) the composition is skewed to polar residues. 2 stretches are compositionally biased toward basic and acidic residues: residues 526–538 (QSPE…RFAD) and 546–557 (PGDHQAREEDLP). The segment covering 607 to 619 (SVTPSEKSLPRNS) has biased composition (polar residues). The segment covering 688 to 705 (NSPNKSSSSSKARPSAAP) has biased composition (low complexity).

In terms of assembly, interacts with tax-6. Expressed in intestine.

This Caenorhabditis elegans protein is Calcineurin-interacting protein 2.